A 248-amino-acid polypeptide reads, in one-letter code: Large ribosomal subunit protein uL30 (248 aa).

M1 carries the post-translational modification N-acetylmethionine. 4 repeat units span residues 7–18 (KKKKVPAVPETL), 19–30 (KKKRKNFAELKI), 31–42 (KRLRKKFAQKML), and 43–54 (RKARRKLIYEKA). Residues 7-54 (KKKKVPAVPETLKKKRKNFAELKIKRLRKKFAQKMLRKARRKLIYEKA) form a 4 X 12 AA tandem repeats region. The residue at position 17 (T17) is a Phosphothreonine. Position 124 is an N6-acetyllysine (K124). K127 is subject to N6-succinyllysine. Position 139 is a phosphotyrosine (Y139).

Belongs to the universal ribosomal protein uL30 family. Component of the large ribosomal subunit. Homodimer. Interacts with DHX33.

The protein resides in the cytoplasm. Component of the large ribosomal subunit. The ribosome is a large ribonucleoprotein complex responsible for the synthesis of proteins in the cell. Binds to G-rich structures in 28S rRNA and in mRNAs. Plays a regulatory role in the translation apparatus; inhibits cell-free translation of mRNAs. This chain is Large ribosomal subunit protein uL30 (RPL7), found in Bos taurus (Bovine).